The following is a 378-amino-acid chain: uncharacterized protein (378 aa).

11 helical membrane passes run 12–34 (SLAF…STFF), 44–66 (VKIY…IFLG), 92–112 (SIAL…LMLI), 132–154 (GFAS…IFLA), 161–180 (EVYA…SIIT), 200–222 (TFLL…IAMM), 235–257 (VEIY…FWGV), 267–285 (VFPL…LFFA), 290–312 (LIFV…RVYI), 327–349 (FLSL…FLFI), and 356–373 (LSAL…FIYL).

The protein localises to the cell membrane. This is an uncharacterized protein from Aquifex aeolicus (strain VF5).